We begin with the raw amino-acid sequence, 430 residues long: Adenylosuccinate synthetase (430 aa).

Residues glycine 12–lysine 18 and glycine 40–threonine 42 contribute to the GTP site. Aspartate 13 (proton acceptor) is an active-site residue. Mg(2+) is bound by residues aspartate 13 and glycine 40. Residues aspartate 13–lysine 16, asparagine 38–histidine 41, threonine 130, arginine 144, glutamine 224, threonine 239, and arginine 303 each bind IMP. Histidine 41 functions as the Proton donor in the catalytic mechanism. Threonine 299 to arginine 305 provides a ligand contact to substrate. Residues arginine 305, lysine 331–aspartate 333, and serine 413–serine 415 each bind GTP.

The protein belongs to the adenylosuccinate synthetase family. In terms of assembly, homodimer. It depends on Mg(2+) as a cofactor.

The protein resides in the cytoplasm. It carries out the reaction IMP + L-aspartate + GTP = N(6)-(1,2-dicarboxyethyl)-AMP + GDP + phosphate + 2 H(+). It participates in purine metabolism; AMP biosynthesis via de novo pathway; AMP from IMP: step 1/2. Plays an important role in the de novo pathway of purine nucleotide biosynthesis. Catalyzes the first committed step in the biosynthesis of AMP from IMP. The sequence is that of Adenylosuccinate synthetase from Ruegeria pomeroyi (strain ATCC 700808 / DSM 15171 / DSS-3) (Silicibacter pomeroyi).